An 85-amino-acid chain; its full sequence is Putative plasmid stability protein y4jJ (85 aa).

Positions 66–78 (EAEHFNQLRDKTP) are enriched in basic and acidic residues. Positions 66–85 (EAEHFNQLRDKTPAEPMSFE) are disordered.

To P.syringae pv tomato plasmid stability protein StbC.

In terms of biological role, involved in plasmid stability. The chain is Putative plasmid stability protein y4jJ from Sinorhizobium fredii (strain NBRC 101917 / NGR234).